A 373-amino-acid polypeptide reads, in one-letter code: tRNA N6-adenosine threonylcarbamoyltransferase (373 aa).

The a divalent metal cation site is built by His128, His132, and Tyr149. Substrate-binding positions include 149–153 (YVSGG), Asp181, Gly196, Glu200, and Asn302. Asp331 contributes to the a divalent metal cation binding site.

This sequence belongs to the KAE1 / TsaD family. As to quaternary structure, component of the EKC/KEOPS complex composed of at least BUD32, CGI121, GON7, KAE1 and PCC1; the whole complex dimerizes. The cofactor is a divalent metal cation.

The protein localises to the cytoplasm. It is found in the nucleus. It catalyses the reaction L-threonylcarbamoyladenylate + adenosine(37) in tRNA = N(6)-L-threonylcarbamoyladenosine(37) in tRNA + AMP + H(+). Its function is as follows. Component of the EKC/KEOPS complex that is required for the formation of a threonylcarbamoyl group on adenosine at position 37 (t(6)A37) in tRNAs that read codons beginning with adenine. The complex is probably involved in the transfer of the threonylcarbamoyl moiety of threonylcarbamoyl-AMP (TC-AMP) to the N6 group of A37. KAE1 likely plays a direct catalytic role in this reaction, but requires other protein(s) of the complex to fulfill this activity. The EKC/KEOPS complex also promotes both telomere uncapping and telomere elongation. The complex is required for efficient recruitment of transcriptional coactivators. The sequence is that of tRNA N6-adenosine threonylcarbamoyltransferase from Candida glabrata (strain ATCC 2001 / BCRC 20586 / JCM 3761 / NBRC 0622 / NRRL Y-65 / CBS 138) (Yeast).